Here is a 451-residue protein sequence, read N- to C-terminus: Uronate isomerase (451 aa).

This sequence belongs to the metallo-dependent hydrolases superfamily. Uronate isomerase family. As to quaternary structure, homotrimer.

It catalyses the reaction D-glucuronate = D-fructuronate. It carries out the reaction aldehydo-D-galacturonate = keto-D-tagaturonate. It participates in carbohydrate metabolism; pentose and glucuronate interconversion. In Thermotoga maritima (strain ATCC 43589 / DSM 3109 / JCM 10099 / NBRC 100826 / MSB8), this protein is Uronate isomerase.